The primary structure comprises 469 residues: Adenosylhomocysteinase (469 aa).

T58, D133, and E195 together coordinate substrate. Position 196-198 (196-198 (TTT)) interacts with NAD(+). The substrate site is built by K225 and D229. Residues N230, 259-264 (GFGDVG), E282, N317, 338-340 (IGH), and N383 contribute to the NAD(+) site.

This sequence belongs to the adenosylhomocysteinase family. It depends on NAD(+) as a cofactor.

The protein resides in the cytoplasm. The catalysed reaction is S-adenosyl-L-homocysteine + H2O = L-homocysteine + adenosine. It participates in amino-acid biosynthesis; L-homocysteine biosynthesis; L-homocysteine from S-adenosyl-L-homocysteine: step 1/1. May play a key role in the regulation of the intracellular concentration of adenosylhomocysteine. This Rhodopseudomonas palustris (strain TIE-1) protein is Adenosylhomocysteinase.